The primary structure comprises 372 residues: MQNNKKTVVVGLSGGVDSSVAAYLLKKNYNVIGLFMRNWDSLINNDYLGNREINNDICPQELDYKDAQEIARQLDIPLYRVDFVKEYWDYVFENFISEYKKGRTPNPDILCNKYIKFDLFAKHAFNELKTDYIATGHYAKMKNGELYRASDKNKDQSYFLSQLSKEQLKKVLFPLENLTKDEIRKIAREQNLITAAKKDSTGICFIGERKFAKFLQNYIPAKKGNVLDITNQKIVGEHSGCFYYTIGQRKGLNLGGNKESYYVCGKNVAENIIYVAPSSRPEFLESNSLLASNLNLNTNNFNKKNLSAKFRYRQEDSKVKVEFLENNFVKVYYDKAQAITPGQQVVFYDGEKCIGGAVIEEIYLNDKKLTYL.

ATP is bound by residues 11–18 (GLSGGVDS) and Met-36. An interaction with target base in tRNA region spans residues 106–108 (NPD). The Nucleophile role is filled by Cys-111. Cys-111 and Cys-204 are disulfide-bonded. Gly-136 provides a ligand contact to ATP. Residues 154 to 156 (KDQ) are interaction with tRNA. The Cysteine persulfide intermediate role is filled by Cys-204. An interaction with tRNA region spans residues 311–312 (RY).

It belongs to the MnmA/TRMU family.

The protein localises to the cytoplasm. It carries out the reaction S-sulfanyl-L-cysteinyl-[protein] + uridine(34) in tRNA + AH2 + ATP = 2-thiouridine(34) in tRNA + L-cysteinyl-[protein] + A + AMP + diphosphate + H(+). Functionally, catalyzes the 2-thiolation of uridine at the wobble position (U34) of tRNA, leading to the formation of s(2)U34. This chain is tRNA-specific 2-thiouridylase MnmA, found in Mycoplasmopsis synoviae (strain 53) (Mycoplasma synoviae).